The following is a 7968-amino-acid chain: Obscurin (7968 aa).

5 consecutive Ig-like domains span residues 10–100, 110–202, 236–322, 331–414, and 420–508; these read PRFL…LQVD, PHFL…LVVD, PASP…QTYS, PAVP…RTVA, and GNLL…VSAP. C31 and C82 are oxidised to a cystine. The segment at 228-249 is disordered; it reads EAMRAEGAPASPPSTGTRTCTV. The span at 240–249 shows a compositional bias: polar residues; the sequence is PSTGTRTCTV. Intrachain disulfides connect C259–C311 and C354–C404. S395 is modified (phosphoserine). The 98-residue stretch at 515–612 folds into the Fibronectin type-III 1 domain; it reads PPVDPVVKAR…FPGTVHLAPK (98 aa). Ig-like domains are found at residues 619–698, 701–790, 798–884, 886–977, 978–1066, 1070–1161, 1162–1252, 1254–1345, 1346–1432, 1438–1524, 1530–1621, and 1622–1719; these read LKAV…MEVR, PGLT…YQLS, LHKD…LRVS, PKVV…DVKE, PKVV…FRLH, PKMM…HITE, PKGV…LHIT, PKAV…DVSE, PKAV…LSFS, PKVV…LSFH, PKAV…HVAE, and PKVV…PQIS. 12 cysteine pairs are disulfide-bonded: C819-C870, C912-C962, C1004-C1054, C1096-C1146, C1188-C1238, C1280-C1330, C1372-C1422, C1464-C1514, C1556-C1606, C1648-C1698, C1723-C1791, and C1830-C1880. In terms of domain architecture, Fibronectin type-III 2 spans 1731–1808; sequence KEHEDIILTA…DFPVQVEEVA (78 aa). 29 Ig-like domains span residues 1809 to 1894, 1896 to 1982, 1987 to 2071, 2077 to 2162, 2165 to 2249, 2289 to 2380, 2468 to 2559, 2564 to 2643, 2646 to 2730, 2736 to 2823, 2826 to 2908, 2920 to 2999, 3003 to 3092, 3095 to 3183, 3184 to 3268, 3273 to 3356, 3359 to 3444, 3449 to 3532, 3537 to 3620, 3625 to 3708, 3713 to 3796, 3801 to 3884, 3890 to 3973, 3978 to 4062, 4068 to 4160, 4171 to 4239, 4248 to 4337, 4340 to 4427, and 4430 to 4518; these read AKFC…LTVS, PRVV…AALR, PVLF…AKLT, VRLV…LVVT, PVSF…ASVK, PVTL…QSIT, PVVL…REVT, LQDA…LEVR, PVVF…ARVR, VGIT…LIVR, PAAI…STAS, EELT…AQLL, RRVH…LRVT, PSVF…VHAR, PVRF…ATLT, PAQF…ASLT, PMPA…ATLT, PAKF…ATLT, PARF…AMLT, PIKF…AMLT, PSKF…ATLT, PARF…ATLT, PVFR…ATLT, PVRF…ASLS, PKFK…PEVT, TADE…NHAS, PEVT…LKVT, NTVV…FLTV, and WRLE…ARLT. Disulfide bonds link C2187–C2237, C2311–C2361, and C2490–C2540. Residues C2668 and C2718 are joined by a disulfide bond. 2 cysteine pairs are disulfide-bonded: C2848/C2898 and C2937/C2987. A Phosphoserine modification is found at S2889. 12 disulfide bridges follow: C3117/C3167, C3206/C3256, C3295/C3344, C3383/C3432, C3471/C3520, C3559/C3608, C3647/C3696, C3735/C3784, C3823/C3872, C3911/C3961, C4000/C4050, and C4089/C4141. A Phosphoserine modification is found at S4015. C4453 and C4508 form a disulfide bridge. Residues 4525-4619 form the Fibronectin type-III 3 domain; sequence PPEDAEVVAR…LPQTVRLAEP (95 aa). In terms of domain architecture, Ig-like 47 spans 4624–4714; sequence PPQPSAPESR…AAATFQVALS (91 aa). Positions 4749–4785 are disordered; the sequence is MSREPTLDSISELPEEDGRSQRLPQEAEEVAPDLSEG. Residue S4750 is modified to Phosphoserine. Residue T4754 is modified to Phosphothreonine. S4757 is subject to Phosphoserine. Phosphothreonine is present on T4788. S4805 is modified (phosphoserine). The tract at residues 4820–4860 is disordered; it reads LKKAGRPGTSPLASKVGAPAAPSVKPQQQQEPLAAVRPPLG. The IQ domain occupies 4872–4901; sequence MDKAAVKIQAAFKGYKVRKEMKQQEGPMFS. 2 Ig-like domains span residues 4898–4989 and 5126–5215; these read PMFS…VVVS and PVFL…AELR. Intrachain disulfides connect C4919-C4971 and C5147-C5199. The segment covering 5238–5256 has biased composition (polar residues); that stretch reads AQGYLSSREQEGTESTTDE. The disordered stretch occupies residues 5238 to 5257; that stretch reads AQGYLSSREQEGTESTTDEG. Ig-like domains lie at 5260–5349 and 5371–5467; these read PQVV…ARLL and PRML…LHVS. Residues 5554 to 5596 form a disordered region; sequence AKLQVPGGDSDEDSKTPSASPRHGRSRPSSSIQESSSESEDGD. S5563 bears the Phosphoserine mark. A Phosphothreonine modification is found at T5569. Low complexity predominate over residues 5570–5589; the sequence is PSASPRHGRSRPSSSIQESS. 2 positions are modified to phosphoserine: S5571 and S5573. In terms of domain architecture, SH3 spans 5600-5667; sequence EIFDIYVVTA…SPAYLDRRLK (68 aa). The region spanning 5693–5877 is the DH domain; that stretch reads RLSSVIQELL…SALPQRAENK (185 aa). Residues 5895–6004 enclose the PH domain; it reads EPIRQGHFIV…WVKEICGIQQ (110 aa). Residue R5975 coordinates a 1,2-diacyl-sn-glycero-3-phospho-(1D-myo-inositol-4,5-bisphosphate). Residue R5980 participates in a 1,2-diacyl-sn-glycero-3-phospho-(1D-myo-inositol-3,4-bisphosphate) binding. Ig-like domains follow at residues 6014–6097 and 6108–6200; these read PDFE…GNCS and PRFV…LRIQ. 2 disulfides stabilise this stretch: C6035–C6087 and C6129–C6182. The segment at 6237–6296 is disordered; that stretch reads RLLGPKAPGPSTGDLTGPGPCPRGAPALQETGSQPPVTGTSEAPAVPPRVPQPLLHEGPE. Residues 6266-6277 are compositionally biased toward polar residues; sequence ETGSQPPVTGTS. The 89-residue stretch at 6357–6445 folds into the Ig-like 54 domain; sequence PSMQVTIEDV…GQVLCKAELL (89 aa). Residues 6468–6721 form the Protein kinase 1 domain; that stretch reads YEVKEEIGRG…AAQCLSHPWF (254 aa). ATP contacts are provided by residues 6474–6482 and K6497; that span reads IGRGVFGFV. The active-site Proton acceptor is the D6587. 3 disordered regions span residues 6777-6863, 6952-7176, and 7217-7272; these read GVAR…AQGC, SGTH…TMRK, and VSQS…TPWE. A Phosphoserine modification is found at S6831. The segment covering 7052–7061 has biased composition (pro residues); sequence AVAPCPPGSF. The span at 7115–7139 shows a compositional bias: low complexity; the sequence is SSPGSASQASSSQVSSLRVGSSQVG. The span at 7160–7172 shows a compositional bias: polar residues; the sequence is DSTPTLQRPQEQA. Positions 7227–7242 are enriched in basic and acidic residues; sequence EARAESQSEEQQEARA. S7244 is subject to Phosphoserine. In terms of domain architecture, Ig-like 55 spans 7463–7552; sequence PTFLRELSDE…GTVTTTGVLR (90 aa). An intrachain disulfide couples C7484 to C7536. A Fibronectin type-III 4 domain is found at 7557-7649; sequence PSSSPCPDIG…PSEQVLLGGP (93 aa). The Protein kinase 2 domain occupies 7672–7924; sequence FAFQTQIQRG…ASSCLQCPWL (253 aa). Residues 7678 to 7686 and K7701 each bind ATP; that span reads IQRGRFSVV. D7791 (proton acceptor) is an active-site residue.

It belongs to the protein kinase superfamily. CAMK Ser/Thr protein kinase family. As to quaternary structure, interacts (via protein kinase domain 2) with CDH2 and (via protein kinase domain 1) with ATP1B1. Isoform 3 interacts with TTN/titin and calmodulin. Isoform 3 interacts with ANK1 isoform Mu17/ank1.5. Requires Mg(2+) as cofactor. Autophosphorylated by protein kinase domains 1 and 2.

It localises to the cytoplasm. It is found in the myofibril. The protein localises to the sarcomere. The protein resides in the m line. Its subcellular location is the z line. It localises to the cell membrane. It is found in the sarcolemma. The protein localises to the nucleus. The catalysed reaction is L-seryl-[protein] + ATP = O-phospho-L-seryl-[protein] + ADP + H(+). It carries out the reaction L-threonyl-[protein] + ATP = O-phospho-L-threonyl-[protein] + ADP + H(+). Functionally, structural component of striated muscles which plays a role in myofibrillogenesis. Probably involved in the assembly of myosin into sarcomeric A bands in striated muscle. Has serine/threonine protein kinase activity and phosphorylates N-cadherin CDH2 and sodium/potassium-transporting ATPase subunit ATP1B1. Binds (via the PH domain) strongly to phosphatidylinositol 3,4-bisphosphate (PtdIns(3,4)P2) and phosphatidylinositol 4,5-bisphosphate (PtdIns(4,5)P2), and to a lesser extent to phosphatidylinositol 3-phosphate (PtdIns(3)P), phosphatidylinositol 4-phosphate (PtdIns(4)P), phosphatidylinositol 5-phosphate (PtdIns(5)P) and phosphatidylinositol 3,4,5-trisphosphate (PtdIns(3,4,5)P3). The chain is Obscurin (OBSCN) from Homo sapiens (Human).